Consider the following 535-residue polypeptide: Ribonuclease Y (535 aa).

A helical membrane pass occupies residues 4 to 24 (IILAMVCALIGLIIGYVAISM). The disordered stretch occupies residues 107 to 145 (TDRASSLDRKDENLSNKEKMLDSKEQSLTDKSRHINERE). Residues 225–285 (TITTVHLPDD…IRREIARMTL (61 aa)) form the KH domain. Residues 351–444 (VLRHSVEVGK…VAAADALSSA (94 aa)) form the HD domain.

Belongs to the RNase Y family.

The protein resides in the cell membrane. Its function is as follows. Endoribonuclease that initiates mRNA decay. The chain is Ribonuclease Y from Streptococcus agalactiae serotype Ia (strain ATCC 27591 / A909 / CDC SS700).